A 243-amino-acid chain; its full sequence is Type III pantothenate kinase (243 aa).

7-14 contributes to the ATP binding site; the sequence is DLGNSRFK. Residues Tyr91 and 98–101 contribute to the substrate site; that span reads GVDR. Asp100 functions as the Proton acceptor in the catalytic mechanism. An ATP-binding site is contributed by Thr122. Thr172 lines the substrate pocket.

It belongs to the type III pantothenate kinase family. Homodimer. It depends on NH4(+) as a cofactor. Requires K(+) as cofactor.

The protein localises to the cytoplasm. The catalysed reaction is (R)-pantothenate + ATP = (R)-4'-phosphopantothenate + ADP + H(+). The protein operates within cofactor biosynthesis; coenzyme A biosynthesis; CoA from (R)-pantothenate: step 1/5. In terms of biological role, catalyzes the phosphorylation of pantothenate (Pan), the first step in CoA biosynthesis. The protein is Type III pantothenate kinase of Stenotrophomonas maltophilia (strain K279a).